The sequence spans 312 residues: tRNA-dihydrouridine(16) synthase (312 aa).

FMN-binding positions include 7–9 (PMQ) and Gln-68. Cys-98 (proton donor) is an active-site residue. Residues Lys-139, 200–202 (NGE), and 224–225 (GR) contribute to the FMN site.

It belongs to the Dus family. DusC subfamily. It depends on FMN as a cofactor.

It carries out the reaction 5,6-dihydrouridine(16) in tRNA + NADP(+) = uridine(16) in tRNA + NADPH + H(+). The catalysed reaction is 5,6-dihydrouridine(16) in tRNA + NAD(+) = uridine(16) in tRNA + NADH + H(+). Functionally, catalyzes the synthesis of 5,6-dihydrouridine (D), a modified base found in the D-loop of most tRNAs, via the reduction of the C5-C6 double bond in target uridines. Specifically modifies U16 in tRNAs. The sequence is that of tRNA-dihydrouridine(16) synthase from Pasteurella multocida (strain Pm70).